Consider the following 84-residue polypeptide: RNA-binding protein Hfq (84 aa).

One can recognise a Sm domain in the interval 10–70 (DNVLNQVRKN…VSTIIPGKTL (61 aa)).

This sequence belongs to the Hfq family. Homohexamer.

RNA chaperone that binds small regulatory RNA (sRNAs) and mRNAs to facilitate mRNA translational regulation in response to envelope stress, environmental stress and changes in metabolite concentrations. Also binds with high specificity to tRNAs. This Natranaerobius thermophilus (strain ATCC BAA-1301 / DSM 18059 / JW/NM-WN-LF) protein is RNA-binding protein Hfq.